We begin with the raw amino-acid sequence, 65 residues long: VESP-VB1 (65 aa).

Positions 1 to 23 (MKMSILFLFALIASLACLQLTFA) are cleaved as a signal peptide. AXPX repeat units lie at residues 23 to 26 (AAPA), 27 to 30 (ASPL), 31 to 34 (ANPG), 35 to 38 (ASPE), 39 to 42 (AAPL), 43 to 46 (ADPL), and 47 to 50 (ADPF). Positions 24 to 49 (APAASPLANPGASPEAAPLADPLADP) are excised as a propeptide. Residue leucine 62 is modified to Leucine amide.

As to expression, expressed by the venom gland.

It localises to the secreted. Functionally, antimicrobial peptide. Shows activity against both Gram-positive (S.aureus MIC=1.0-3.75 ug/ml) and -negative (E.coli MIC=7.5-15 ug/ml) bacteria, as well against fungi (C.albicans MIC=30 ug/ml). Also promotes important mast cell degranulation. Shows little hemolytic activity on rabbit and human erythrocytes. Its mast cell degranulation activity may be related to the activation of G-protein coupled receptors in mast cells as well as interaction with other proteins located in cell endosomal membranes in the mast cells. This chain is VESP-VB1, found in Vespa bicolor (Black shield wasp).